The following is a 153-amino-acid chain: UPAR/Ly6 domain-containing protein cold (153 aa).

Positions 1 to 25 (MKSWEIAVVLVAAVYLCSQVNFVAG) are cleaved as a signal peptide. The Extracellular segment spans residues 26-130 (LECYVCSNQT…FVISGAPSRQ (105 aa)). 6 cysteine pairs are disulfide-bonded: Cys28-Cys55, Cys31-Cys41, Cys48-Cys81, Cys87-Cys112, Cys99-Cys109, and Cys113-Cys118. N-linked (GlcNAc...) asparagine glycosylation is present at Asn33. Ser124 carries GPI-anchor amidated serine lipidation. The propeptide at 125–153 (GAPSRQGYGVCLTLLTALLGLGSWLIPRS) is removed in mature form. The chain crosses the membrane as a helical span at residues 131 to 151 (GYGVCLTLLTALLGLGSWLIP). The Cytoplasmic segment spans residues 152–153 (RS).

This sequence belongs to the snake toxin-like superfamily. Post-translationally, GPI-anchored. In terms of tissue distribution, expressed in all tissues that form septate junctions, including hindgut, trachea, epidermis and dorsal pouch. Expressed in subperineurial glial cells that form the hemolymph-brain barrier of the central nervous system.

The protein localises to the endosome membrane. It is found in the endoplasmic reticulum membrane. Its subcellular location is the cell membrane. It localises to the cell junction. The protein resides in the septate junction. Functionally, required for septate junction assembly, possibly by organizing the preassembly and transport of septate junction proteins such as dlg1/disks large 1 and Nrx-IV/Neurexin-IV. Involved in paracellular barrier functions of trachea, hindgut and salivary gland mediated by epithelial cell septate junctions. Involved in paracellular barrier functions of the hemolymph-brain barrier (insect blood-brain barrier) mediated by glial cell septate junctions. Required for maintenance of septate junctions in imaginal disk epithelial cells. Involved in the epithelial cell wound-healing response. Directly or indirectly mediates cell-cell adhesion during septate junction formation. The polypeptide is UPAR/Ly6 domain-containing protein cold (Drosophila melanogaster (Fruit fly)).